Consider the following 880-residue polypeptide: MSTVEPNVYDPHQVETSAQQFWDATRAFQVDENSEKPKFYCLSMLPYPSGALHMGHVRNYTISDVVSRYKRMTGHNVLQPMGWDAFGLPAENAAIKNKTAPAKWTYANIAHMRAQLKSLGYAIDWSREFATCTPDYYVHEQRMFTRLMRKGLAYRRNAVVNWDPIDQTVLANEQVIDGRGWRSGAVVEKREIPQWFLRITDYAQELLDGLDQLDGWPDSVKTMQRNWIGRSEGLEIQFDVRDTNGAALDPLRVFTTRPDTLMGVTFVSIAAEHPLALHAAKSNPELAALLETLKHGGVSEAELETQEKRGMAIGLTAVHPISGEQVPVWVANFVLMGYGTGAVMAVPGHDQRDFEFANKYGLPIVQVVKLREPRNDDEQRWDATEWRDWYTDKSRELELINSAEFDGLDFGGAFEALAERFERKGQGQRRVNYRLRDWGVSRQRYWGCPIPVIYCPKCGAVPVPEDQLPVVLPENVEFAGTGSPIKTEPTWRQTTCPDCGGPAERETDTFDTFMESSWYVARYTSPNAREMVDRRANYWMPADLYVGGIEHAILHLMYFRFYHKLMRDARLVDSDEPVTNLLTQGMVIADTFYRDADNGGKDWINPADVEIQRDERGRVTGAVLIADGQPVHIGGTEKMSKSKNNGVDPQSMVAKYGADTVRLFSMFAAPPEQSLEWNEAGVDGMARFMRRLWAQVHKHVGEGAAVALDVAALSAEQKAIRRKTHETIGKVSDDYGRRHSFNTAIAAVMELSNALAKFDDASDQGRAVRQEALEAMVLLLNPITPHASHALWQVLGRGETLLENVAFPQADVSALVRDALTLAVQINGKLRGTIDVAADAAREQIEALAQAEPNAAKFLDGLSVRKIIIVPGKIVNIVAG.

Residues 46-56 (PYPSGALHMGH) carry the 'HIGH' region motif. Residues 483-502 (SPIKTEPTWRQTTCPDCGGP) form a disordered region. A 'KMSKS' region motif is present at residues 638-642 (KMSKS). Lys-641 contacts ATP.

This sequence belongs to the class-I aminoacyl-tRNA synthetase family.

Its subcellular location is the cytoplasm. It catalyses the reaction tRNA(Leu) + L-leucine + ATP = L-leucyl-tRNA(Leu) + AMP + diphosphate. The chain is Leucine--tRNA ligase from Xanthomonas oryzae pv. oryzae (strain PXO99A).